The following is a 403-amino-acid chain: Imidazolonepropionase (403 aa).

The Fe(3+) site is built by His-68 and His-70. His-68 and His-70 together coordinate Zn(2+). Residues Arg-77, Tyr-140, and His-173 each contribute to the 4-imidazolone-5-propanoate site. Position 140 (Tyr-140) interacts with N-formimidoyl-L-glutamate. His-238 serves as a coordination point for Fe(3+). His-238 is a Zn(2+) binding site. Residue Gln-241 coordinates 4-imidazolone-5-propanoate. Position 313 (Asp-313) interacts with Fe(3+). Zn(2+) is bound at residue Asp-313. N-formimidoyl-L-glutamate-binding residues include Asn-315 and Gly-317. Ser-318 is a binding site for 4-imidazolone-5-propanoate.

This sequence belongs to the metallo-dependent hydrolases superfamily. HutI family. Zn(2+) serves as cofactor. The cofactor is Fe(3+).

Its subcellular location is the cytoplasm. The catalysed reaction is 4-imidazolone-5-propanoate + H2O = N-formimidoyl-L-glutamate. Its pathway is amino-acid degradation; L-histidine degradation into L-glutamate; N-formimidoyl-L-glutamate from L-histidine: step 3/3. In terms of biological role, catalyzes the hydrolytic cleavage of the carbon-nitrogen bond in imidazolone-5-propanoate to yield N-formimidoyl-L-glutamate. It is the third step in the universal histidine degradation pathway. This is Imidazolonepropionase from Hahella chejuensis (strain KCTC 2396).